The sequence spans 240 residues: MDEKDLATQQAQAGQDPRLPGPDEDQERAEGAEAQAAEGAPPPHRVIPPHPGLRQDGGPGKPPRPSLRWDGGPGKAFPKPADGATYAKEAAEKGMTPPQLGAGQAGGPGKPPHPGPDRDGGSKASRASSPKKAGGKGLVSLKGDRAFQRLKKGRSGRGRLVLVRWLPRQEGVAVGIVVSKKVGKAVVRNKVRRRIREILRRLHLPPADLLVIAQPEAKDAGFAELARDLFLALKKSGLVQ.

Residues 1–140 (MDEKDLATQQ…KKAGGKGLVS (140 aa)) are disordered. Over residues 40–51 (APPPHRVIPPHP) the composition is skewed to pro residues. The segment at 47 to 123 (IPPHPGLRQD…PGPDRDGGSK (77 aa)) is insert. A compositionally biased stretch (low complexity) spans 122–132 (SKASRASSPKK).

This sequence belongs to the RnpA family. In terms of assembly, consists of a catalytic RNA component (M1 or rnpB) and a protein subunit.

It carries out the reaction Endonucleolytic cleavage of RNA, removing 5'-extranucleotides from tRNA precursor.. Its function is as follows. RNaseP catalyzes the removal of the 5'-leader sequence from pre-tRNA to produce the mature 5'-terminus. It can also cleave other RNA substrates such as 4.5S RNA. The protein component plays an auxiliary but essential role in vivo by binding to the 5'-leader sequence and broadening the substrate specificity of the ribozyme. The sequence is that of Ribonuclease P protein component from Thermus filiformis.